A 264-amino-acid chain; its full sequence is uncharacterized protein (264 aa).

Transmembrane regions (helical) follow at residues Met1 to Leu21, Phe43 to Val63, Val95 to Leu115, Ile146 to Leu166, Gly181 to Val201, and Ile215 to Pro235.

This sequence to M.pneumoniae MPN_308 C-terminal region.

The protein localises to the cell membrane. This is an uncharacterized protein from Mycoplasma pneumoniae (strain ATCC 29342 / M129 / Subtype 1) (Mycoplasmoides pneumoniae).